A 505-amino-acid polypeptide reads, in one-letter code: ATP synthase subunit alpha (505 aa).

170–177 (GDRQTGKT) provides a ligand contact to ATP.

It belongs to the ATPase alpha/beta chains family. As to quaternary structure, F-type ATPases have 2 components, CF(1) - the catalytic core - and CF(0) - the membrane proton channel. CF(1) has five subunits: alpha(3), beta(3), gamma(1), delta(1), epsilon(1). CF(0) has four main subunits: a(1), b(1), b'(1) and c(9-12).

Its subcellular location is the cellular thylakoid membrane. It carries out the reaction ATP + H2O + 4 H(+)(in) = ADP + phosphate + 5 H(+)(out). Its function is as follows. Produces ATP from ADP in the presence of a proton gradient across the membrane. The alpha chain is a regulatory subunit. The protein is ATP synthase subunit alpha of Prochlorococcus marinus subsp. pastoris (strain CCMP1986 / NIES-2087 / MED4).